The following is a 301-amino-acid chain: Putative S-adenosyl-L-methionine-dependent methyltransferase Mflv_5024 (301 aa).

S-adenosyl-L-methionine is bound by residues aspartate 129 and 158 to 159; that span reads DL.

Belongs to the UPF0677 family.

Its function is as follows. Exhibits S-adenosyl-L-methionine-dependent methyltransferase activity. This chain is Putative S-adenosyl-L-methionine-dependent methyltransferase Mflv_5024, found in Mycolicibacterium gilvum (strain PYR-GCK) (Mycobacterium gilvum (strain PYR-GCK)).